We begin with the raw amino-acid sequence, 616 residues long: tRNA 5-methylaminomethyl-2-thiouridine biosynthesis bifunctional protein MnmC (616 aa).

The tRNA (mnm(5)s(2)U34)-methyltransferase stretch occupies residues 1–232 (MLRTIVPARL…KRHCMSARFA (232 aa)). Residues 249-616 (IGGGVAGAAA…ARFAGNRKTA (368 aa)) are FAD-dependent cmnm(5)s(2)U34 oxidoreductase.

The protein in the N-terminal section; belongs to the methyltransferase superfamily. tRNA (mnm(5)s(2)U34)-methyltransferase family. It in the C-terminal section; belongs to the DAO family. It depends on FAD as a cofactor.

It is found in the cytoplasm. It carries out the reaction 5-aminomethyl-2-thiouridine(34) in tRNA + S-adenosyl-L-methionine = 5-methylaminomethyl-2-thiouridine(34) in tRNA + S-adenosyl-L-homocysteine + H(+). Functionally, catalyzes the last two steps in the biosynthesis of 5-methylaminomethyl-2-thiouridine (mnm(5)s(2)U) at the wobble position (U34) in tRNA. Catalyzes the FAD-dependent demodification of cmnm(5)s(2)U34 to nm(5)s(2)U34, followed by the transfer of a methyl group from S-adenosyl-L-methionine to nm(5)s(2)U34, to form mnm(5)s(2)U34. This chain is tRNA 5-methylaminomethyl-2-thiouridine biosynthesis bifunctional protein MnmC, found in Thiobacillus denitrificans (strain ATCC 25259 / T1).